Here is a 41-residue protein sequence, read N- to C-terminus: MSFITIVNWELVQFVSVSMIHEYVSHRSVYLYRYSFPRCSN.

This is an uncharacterized protein from Bacillus subtilis (strain 168).